Here is a 47-residue protein sequence, read N- to C-terminus: FGIVEGLMTTVHSITATQKVPTPDVSVVDLTVRLVSWYDNEWGYSSR.

This sequence belongs to the glyceraldehyde-3-phosphate dehydrogenase family. Homotetramer.

The protein localises to the cytoplasm. It catalyses the reaction D-glyceraldehyde 3-phosphate + phosphate + NAD(+) = (2R)-3-phospho-glyceroyl phosphate + NADH + H(+). Its pathway is carbohydrate degradation; glycolysis; pyruvate from D-glyceraldehyde 3-phosphate: step 1/5. This chain is Glyceraldehyde-3-phosphate dehydrogenase, cytosolic, found in Pseudotsuga menziesii (Douglas-fir).